Consider the following 76-residue polypeptide: uncharacterized protein (76 aa).

3 consecutive transmembrane segments (helical) span residues 1–21, 35–55, and 56–76; these read MTAI…HLQL, CFDI…LLII, and NNKF…NTMI.

It is found in the cell membrane. This is an uncharacterized protein from Borreliella burgdorferi (strain ATCC 35210 / DSM 4680 / CIP 102532 / B31) (Borrelia burgdorferi).